We begin with the raw amino-acid sequence, 98 residues long: Small ribosomal subunit protein uS19 (98 aa).

The segment at 77-98 (TRTYRGHAGGKAEKGGAAPKRK) is disordered.

The protein belongs to the universal ribosomal protein uS19 family.

Functionally, protein S19 forms a complex with S13 that binds strongly to the 16S ribosomal RNA. The protein is Small ribosomal subunit protein uS19 of Chlorobium phaeovibrioides (strain DSM 265 / 1930) (Prosthecochloris vibrioformis (strain DSM 265)).